A 143-amino-acid chain; its full sequence is Cytochrome c-type biogenesis protein CcmE (143 aa).

Topologically, residues Met-1–Lys-8 are cytoplasmic. Residues Leu-9–Ala-29 traverse the membrane as a helical; Signal-anchor for type II membrane protein segment. Residues Leu-30 to Gln-143 lie on the Periplasmic side of the membrane. Residues His-124 and Tyr-128 each contribute to the heme site.

It belongs to the CcmE/CycJ family.

The protein localises to the cell inner membrane. Functionally, heme chaperone required for the biogenesis of c-type cytochromes. Transiently binds heme delivered by CcmC and transfers the heme to apo-cytochromes in a process facilitated by CcmF and CcmH. This Legionella pneumophila protein is Cytochrome c-type biogenesis protein CcmE.